The following is a 601-amino-acid chain: MAEKNSHIRNFSIIAHIDHGKSTLADRLLEHTGTVTKREAQAQFLDNMELERERGITIKAQTVRMKYRAQDGRDYELNLIDTPGHVDFAYEVSRSMAACEGAILVVDATQGVEAQTLANVYQALDHDLEIVPVINKIDLPSADVEGVRQEIEEVIGLDAKDAVPASAKEGIGIGEILEQIVHRVPPPEGDPEAPLKAIVFDSWYDSYRGVVMLVRVFEGTVRPKQKIRLWSNRKEFEVQELGIFAPFAKAVGELQAGEVGVVVANVKDVHDAKVGDTITDAARPTEAPFPGFKVVKPMVFSGVFPIEAADYEQLRDALEKLSLNDSAFTYEPETSQALGFGFRCGYLGLLHMEIVQERLEREYQLALITTAPSVVYRVTDTTGAVEEIDNPAKLPPVQKIAKLEEPHLTCHIHARTEDVGAILKLCQERRGLQRDLKYLGTKRVQITYDIPLAEVVFDFFDKLKSVSRGYASLDYELKGYEEADLVKLDILINGEPVDALSVIVHRERAYQRGRDLCQRLREVIPKQMYEVAIQAAIGAKVIARETVKAFRKNVLAKCYGGDISRKRKLLEKQKEGKKRMKQVGSVEIPQEAFLAVLKVEE.

The region spanning 6 to 188 (SHIRNFSIIA…QIVHRVPPPE (183 aa)) is the tr-type G domain. GTP-binding positions include 18–23 (DHGKST) and 135–138 (NKID).

The protein belongs to the TRAFAC class translation factor GTPase superfamily. Classic translation factor GTPase family. LepA subfamily.

It is found in the cell inner membrane. It carries out the reaction GTP + H2O = GDP + phosphate + H(+). Functionally, required for accurate and efficient protein synthesis under certain stress conditions. May act as a fidelity factor of the translation reaction, by catalyzing a one-codon backward translocation of tRNAs on improperly translocated ribosomes. Back-translocation proceeds from a post-translocation (POST) complex to a pre-translocation (PRE) complex, thus giving elongation factor G a second chance to translocate the tRNAs correctly. Binds to ribosomes in a GTP-dependent manner. This chain is Elongation factor 4, found in Anaeromyxobacter dehalogenans (strain 2CP-C).